The primary structure comprises 360 residues: Vomilenine reductase (360 aa).

An Enoyl reductase (ER) domain is found at 23-351 (GLLSPFNFSR…KADVKYRFVI (329 aa)). A Zn(2+)-binding site is contributed by cysteine 50. An an alcohol-binding site is contributed by serine 52. NADP(+) is bound at residue serine 52. Aspartate 53, histidine 72, glutamate 73, cysteine 103, cysteine 106, cysteine 109, cysteine 117, and cysteine 166 together coordinate Zn(2+). Residue histidine 72 coordinates an alcohol. The NADP(+) site is built by leucine 192, glycine 194, leucine 195, serine 214, threonine 215, serine 216, lysine 219, lysine 220, valine 277, alanine 279, serine 301, and arginine 348.

The protein belongs to the zinc-containing alcohol dehydrogenase family. Class-P subfamily. In terms of assembly, homodimer. Zn(2+) serves as cofactor. Confined to roots.

It is found in the cytoplasm. The catalysed reaction is (2R)-1,2-dihydrovomilenine + NADP(+) = vomilenine + NADPH + H(+). It functions in the pathway alkaloid biosynthesis; ajmaline biosynthesis. With respect to regulation, inhibited by EDTA and p-hydroxymercuribenzoate, a sulfhydryl reagent. Its function is as follows. Alcohol dehydrogenase involved in the biosynthesis of ajmaline-type monoterpenoid indole alkaloids (MIAs) natural products, important plant-derived pharmaceuticals used in the therapy of heart disorders. Catalyzes the conversion of vomilenine to 1,2-dihydrovomilenine, an intermediate chemical in the biosynthesis of ajmaline. The sequence is that of Vomilenine reductase from Rauvolfia serpentina (Serpentine wood).